Reading from the N-terminus, the 1997-residue chain is Otoferlin (1997 aa).

The 98-residue stretch at 1–98 (MALLIHLKTV…VEESHVEVTD (98 aa)) folds into the C2 1 domain. At 1–1963 (MALLIHLKTV…ARYFLWHTYR (1963 aa)) the chain is on the cytoplasmic side. Residues 128–171 (WDDGDFLGDESLQEEEKDSQETDGLLPGSRPSSRPPGEKSFRRA) form a disordered region. The segment covering 129 to 145 (DDGDFLGDESLQEEEKD) has biased composition (acidic residues). 2 C2 domains span residues 236–357 (KRSK…HKWA) and 400–531 (IEGN…FLPT). The disordered stretch occupies residues 642 to 694 (NEVDGLSRPQRPRPRKEPGDEEEVDLIQNASDDEAGDAGDLASVSSTPPMRPQ). Acidic residues predominate over residues 660–678 (GDEEEVDLIQNASDDEAGD). The stretch at 792 to 821 (RERLKSCMRELENMGQQARMLRAQVKRHTV) forms a coiled coil. C2 domains are found at residues 944 to 1069 (LHAF…PPRF) and 1115 to 1242 (DRGP…PSWN). The Ca(2+) site is built by Asp-976, Asp-982, Asp-1038, Asp-1040, and Asp-1046. Disordered regions lie at residues 1299–1324 (AEEE…PDES) and 1343–1405 (LRQQ…KPKI). Composition is skewed to acidic residues over residues 1314-1324 (EEPEEEEPDES) and 1352-1361 (DLEEKEEVDN). Over residues 1370–1383 (KGKEKARAAKEEKK) the composition is skewed to basic and acidic residues. Positions 1387–1396 (QSSGSGQGSE) are enriched in low complexity. 2 C2 domains span residues 1464-1593 (LPED…ATCG) and 1714-1865 (DMPA…KQCT). Residues Asp-1508, Asp-1514, Asp-1563, Asp-1565, Asp-1571, Asp-1836, Ser-1839, and Asp-1842 each contribute to the Ca(2+) site. Residues 1964–1984 (WLLLKLLLLLLLLLLLALFLY) traverse the membrane as a helical segment. The Extracellular segment spans residues 1985-1997 (SVPGYLVKKILGA).

It belongs to the ferlin family. In terms of assembly, interacts with SNAP2; the interaction is direct. Interacts with STX1; the interaction is direct. Interacts with RAB8B. It depends on Ca(2+) as a cofactor. As to expression, isoform 1 and isoform 3 are found in adult brain. Isoform 2 is expressed in the fetus and in adult brain, heart, placenta, skeletal muscle and kidney.

The protein resides in the cytoplasmic vesicle. It is found in the secretory vesicle. It localises to the synaptic vesicle membrane. Its subcellular location is the basolateral cell membrane. The protein localises to the endoplasmic reticulum membrane. The protein resides in the golgi apparatus membrane. It is found in the presynaptic cell membrane. It localises to the cell membrane. Functionally, key calcium ion sensor involved in the Ca(2+)-triggered synaptic vesicle-plasma membrane fusion and in the control of neurotransmitter release at these output synapses. Interacts in a calcium-dependent manner to the presynaptic SNARE proteins at ribbon synapses of cochlear inner hair cells (IHCs) to trigger exocytosis of neurotransmitter. Also essential to synaptic exocytosis in immature outer hair cells (OHCs). May also play a role within the recycling of endosomes. This is Otoferlin (OTOF) from Homo sapiens (Human).